We begin with the raw amino-acid sequence, 261 residues long: CD40 ligand (261 aa).

Over 1–22 the chain is Cytoplasmic; sequence MIETYNQPSPRSAATGLPVRMK. Residues 23 to 43 form a helical; Signal-anchor for type II membrane protein membrane-spanning segment; it reads IFMYLLTIFLITQMIGSALFA. The Extracellular portion of the chain corresponds to 44–261; sequence VYLHRRLDKI…GFTSFGLLKL (218 aa). A THD domain is found at 122 to 261; the sequence is IAAHVISEAS…GFTSFGLLKL (140 aa). A disulfide bridge links cysteine 178 with cysteine 218. Residue asparagine 240 is glycosylated (N-linked (GlcNAc...) asparagine).

The protein belongs to the tumor necrosis factor family. As to quaternary structure, homotrimer. Interacts with CD28. CD40 ligand, soluble form: Exists as either a monomer or a homotrimer. Forms a ternary complex between CD40 and integrins for CD40-CD40LG signaling. The soluble form derives from the membrane form by proteolytic processing.

The protein resides in the cell membrane. It is found in the cell surface. The protein localises to the secreted. Its function is as follows. Cytokine that acts as a ligand to CD40/TNFRSF5. Costimulates T-cell proliferation and cytokine production. Its cross-linking on T-cells generates a costimulatory signal which enhances the production of IL4 and IL10 in conjunction with the TCR/CD3 ligation and CD28 costimulation. Induces the activation of NF-kappa-B. Induces the activation of kinases MAPK8 and PAK2 in T-cells. Mediates B-cell proliferation in the absence of co-stimulus as well as IgE production in the presence of IL4. Involved in immunoglobulin class switching. In terms of biological role, acts as a ligand for integrins, specifically ITGA5:ITGB1 and ITGAV:ITGB3; both integrins and the CD40 receptor are required for activation of CD40-CD40LG signaling, which have cell-type dependent effects, such as B-cell activation, NF-kappa-B signaling and anti-apoptotic signaling. The chain is CD40 ligand (CD40LG) from Cercocebus atys (Sooty mangabey).